The following is a 369-amino-acid chain: Opsin Rh6 (369 aa).

Topologically, residues 1–46 (MASLHPPSFAYMRDGRNLSLAESVPAEIMHMVDPYWYQWPPLEPMW) are extracellular. An N-linked (GlcNAc...) asparagine glycan is attached at N17. Residues 47-71 (FGIIGFVIAILGTMSLAGNFIVMYI) form a helical membrane-spanning segment. At 72–83 (FTSSKGLRTPSN) the chain is on the cytoplasmic side. Residues 84-109 (MFVVNLAFSDFMMMFTMFPPVVLNGF) form a helical membrane-spanning segment. Residues 110–123 (YGTWIMGPFLCELY) are Extracellular-facing. Cysteines 120 and 197 form a disulfide. A helical transmembrane segment spans residues 124–143 (GMFGSLFGCVSIWSMTLIAY). The Cytoplasmic segment spans residues 144–162 (DRYCVIVKGMARKPLTATA). Residues 163-186 (AVLRLMVVWTICGAWALMPLFGWN) form a helical membrane-spanning segment. At 187–210 (RYVPEGNMTACGTDYFAKDWWNRS) the chain is on the extracellular side. N-linked (GlcNAc...) asparagine glycans are attached at residues N193 and N208. Residues 211–238 (YIIVYSLWVYLTPLLTIIFSYWHIMKAV) form a helical membrane-spanning segment. At 239–274 (AAHEKAMREQAKKMNVASLRNSEADKSKAIEIKLAK) the chain is on the cytoplasmic side. Residues 275–298 (VALTTISLWFFAWTPYTIINYAGI) traverse the membrane as a helical segment. Over 299–305 (FESMHLS) the chain is Extracellular. The helical transmembrane segment at 306-330 (PLSTICGSVFAKANAVCNPIVYGLS) threads the bilayer. At K317 the chain carries N6-(retinylidene)lysine. The Cytoplasmic segment spans residues 331 to 369 (HPKYKQVLREKMPCLACGKDDLTSDSRTQATAEISESQA).

This sequence belongs to the G-protein coupled receptor 1 family. Opsin subfamily. Post-translationally, phosphorylated on some or all of the serine and threonine residues present in the C-terminal region. In terms of tissue distribution, each Drosophila eye is composed of 800 facets or ommatidia. Each ommatidium contains 8 photoreceptor cells (R1-R8), the R1 to R6 cells are outer cells, while R7 and R8 are inner cells. Rh6 is expressed in a subset of R8 cells, most likely expressed in the subset of R8 cells paired with Rh4-expressing R7 cells (R7y).

The protein resides in the membrane. Its function is as follows. Visual pigments are the light-absorbing molecules that mediate vision. They consist of an apoprotein, opsin, covalently linked to cis-retinal. In Drosophila melanogaster (Fruit fly), this protein is Opsin Rh6 (Rh6).